Consider the following 205-residue polypeptide: MPMVVAKRNARERTRVHTVNQAFLVLKQHLPSLRQFTKRVSKLRILNAAITYIDTLLKLIQSSEAVPQSVISATLGPIVPTPVRAVHKISKPDTVISQPIRPLAPVLPRHETYLPAPIAATCAPDHSLVDYRSTFASSLAPPVPMQMPSVFSPQPTFPYMKSLLDYPTYFYQPSTAPPPPPAPTAPQSHLIVNNQLVPMPSYQCF.

The tract at residues 3 to 16 (MVVAKRNARERTRV) is basic motif. Positions 3 to 56 (MVVAKRNARERTRVHTVNQAFLVLKQHLPSLRQFTKRVSKLRILNAAITYIDTL) constitute a bHLH domain. The tract at residues 17 to 56 (HTVNQAFLVLKQHLPSLRQFTKRVSKLRILNAAITYIDTL) is helix-loop-helix motif.

As to expression, expressed in the ADL sensory neurons.

It is found in the nucleus. Functionally, acts as a transcriptional regulator. May mediate transcriptional activation by binding to the E-box motif 5'-CANNTG-3'. Required for the correct morphology, terminal identity and function of the ADL sensory neurons by controlling the expression of the ADL-specific gene repertoire, including chemoreceptor encoding genes, ion channel encoding genes, neuropeptides and the neurotransmitter eat-4. Regulates the expression of the srh-234 chemoreceptor encoding gene in the ADL neurons under feeding conditions. Plays a role in the chemorepulsive response toward ascaroside pheromones mediated by the ADL sensory neurons. This Caenorhabditis elegans protein is Helix-loop-helix protein 4 (hlh-4).